The following is a 487-amino-acid chain: 3-octaprenyl-4-hydroxybenzoate carboxy-lyase (487 aa).

N172 contacts Mn(2+). Residues 175–177 (IYR), 189–191 (RWL), and 194–195 (RG) each bind prenylated FMN. Residue E238 coordinates Mn(2+). Catalysis depends on D287, which acts as the Proton donor.

This sequence belongs to the UbiD family. Homohexamer. Prenylated FMN serves as cofactor. Requires Mn(2+) as cofactor.

It localises to the cell membrane. The enzyme catalyses a 4-hydroxy-3-(all-trans-polyprenyl)benzoate + H(+) = a 2-(all-trans-polyprenyl)phenol + CO2. Its pathway is cofactor biosynthesis; ubiquinone biosynthesis. Catalyzes the decarboxylation of 3-octaprenyl-4-hydroxy benzoate to 2-octaprenylphenol, an intermediate step in ubiquinone biosynthesis. This is 3-octaprenyl-4-hydroxybenzoate carboxy-lyase from Nitrosomonas eutropha (strain DSM 101675 / C91 / Nm57).